Reading from the N-terminus, the 238-residue chain is ATP synthase subunit a (238 aa).

Transmembrane regions (helical) follow at residues T18–L38, F76–F96, P114–A134, F150–L170, G188–W208, and F211–I231.

This sequence belongs to the ATPase A chain family. F-type ATPases have 2 components, CF(1) - the catalytic core - and CF(0) - the membrane proton channel. CF(1) has five subunits: alpha(3), beta(3), gamma(1), delta(1), epsilon(1). CF(0) has three main subunits: a(1), b(2) and c(9-12). The alpha and beta chains form an alternating ring which encloses part of the gamma chain. CF(1) is attached to CF(0) by a central stalk formed by the gamma and epsilon chains, while a peripheral stalk is formed by the delta and b chains.

The protein localises to the cell membrane. Key component of the proton channel; it plays a direct role in the translocation of protons across the membrane. This is ATP synthase subunit a from Pediococcus pentosaceus (strain ATCC 25745 / CCUG 21536 / LMG 10740 / 183-1w).